A 466-amino-acid polypeptide reads, in one-letter code: Phosphomethylpyrimidine synthase (466 aa).

Substrate-binding positions include Asn80, Met109, Tyr139, His175, 195–197 (SRG), 236–239 (DSLR), and Glu275. His279 serves as a coordination point for Zn(2+). Tyr302 contacts substrate. Residue His343 participates in Zn(2+) binding. Positions 423, 426, and 431 each coordinate [4Fe-4S] cluster.

It belongs to the ThiC family. The cofactor is [4Fe-4S] cluster.

It catalyses the reaction 5-amino-1-(5-phospho-beta-D-ribosyl)imidazole + S-adenosyl-L-methionine = 4-amino-2-methyl-5-(phosphooxymethyl)pyrimidine + CO + 5'-deoxyadenosine + formate + L-methionine + 3 H(+). It participates in cofactor biosynthesis; thiamine diphosphate biosynthesis. Catalyzes the synthesis of the hydroxymethylpyrimidine phosphate (HMP-P) moiety of thiamine from aminoimidazole ribotide (AIR) in a radical S-adenosyl-L-methionine (SAM)-dependent reaction. The protein is Phosphomethylpyrimidine synthase of Prochlorococcus marinus (strain NATL2A).